Here is a 105-residue protein sequence, read N- to C-terminus: Replication restart protein PriB (105 aa).

Residues Met-1–Asp-102 enclose the SSB domain.

The protein belongs to the PriB family. In terms of assembly, homodimer. Interacts with PriA and DnaT. Component of the replication restart primosome. Primosome assembly occurs via a 'hand-off' mechanism. PriA binds to replication forks, subsequently PriB then DnaT bind; DnaT then displaces ssDNA to generate the helicase loading substrate.

Functionally, involved in the restart of stalled replication forks, which reloads the replicative helicase on sites other than the origin of replication; the PriA-PriB pathway is the major replication restart pathway. During primosome assembly it facilitates complex formation between PriA and DnaT on DNA; stabilizes PriA on DNA. Stimulates the DNA unwinding activity of PriA helicase. The protein is Replication restart protein PriB of Yersinia pseudotuberculosis serotype O:1b (strain IP 31758).